The sequence spans 633 residues: Threonine--tRNA ligase (633 aa).

Residues 1–59 (MIKVTFLAEQKVKEYSGRVTGFDILQPDALREAIAFKVNGELYDLSREIESDTEIEVIQ) enclose the TGS domain. The tract at residues 240–532 (DHRKIAKDMD…LIENYAGKFP (293 aa)) is catalytic. Positions 332, 383, and 509 each coordinate Zn(2+).

Belongs to the class-II aminoacyl-tRNA synthetase family. Homodimer. Zn(2+) serves as cofactor.

The protein localises to the cytoplasm. The enzyme catalyses tRNA(Thr) + L-threonine + ATP = L-threonyl-tRNA(Thr) + AMP + diphosphate + H(+). Its function is as follows. Catalyzes the attachment of threonine to tRNA(Thr) in a two-step reaction: L-threonine is first activated by ATP to form Thr-AMP and then transferred to the acceptor end of tRNA(Thr). Also edits incorrectly charged L-seryl-tRNA(Thr). The polypeptide is Threonine--tRNA ligase (Wolbachia pipientis subsp. Culex pipiens (strain wPip)).